The chain runs to 283 residues: MGEFSILLQQGNGWFFIPSAILLGILHGLEPGHSKTMMAAFIIAIKGTIKQAFMLGLAATLSHTAVVWLIALGGMYLSRAYAAESVEPWLQLISAIIILGTACWMFWRTWRGEQQWLTGSHHDHDHDHDHDHDHDHDHDHDHDHHGHTYPEGAMSKAYQDAHERAHAADIQRRFHGQKVTNEQILLFGLTGGLIPCPAAITLLLICIQLQALTLGATMVLCFSLGLALTLVAVGVGAAISVQQAVKRWNGFTTLARRAPYFSSILIGLVGLYMGIHGYTGIMQ.

At 1-5 (MGEFS) the chain is on the periplasmic side. Residues 6-26 (ILLQQGNGWFFIPSAILLGIL) form a helical membrane-spanning segment. The Cytoplasmic segment spans residues 27–51 (HGLEPGHSKTMMAAFIIAIKGTIKQ). Residues 52-72 (AFMLGLAATLSHTAVVWLIAL) traverse the membrane as a helical segment. Residues 73–85 (GGMYLSRAYAAES) lie on the Periplasmic side of the membrane. A helical transmembrane segment spans residues 86–106 (VEPWLQLISAIIILGTACWMF). At 107-183 (WRTWRGEQQW…FHGQKVTNEQ (77 aa)) the chain is on the cytoplasmic side. The segment covering 120 to 148 (SHHDHDHDHDHDHDHDHDHDHDHDHHGHT) has biased composition (basic and acidic residues). Residues 120–149 (SHHDHDHDHDHDHDHDHDHDHDHDHHGHTY) form a disordered region. Residues 184-204 (ILLFGLTGGLIPCPAAITLLL) form a helical membrane-spanning segment. The Periplasmic segment spans residues 205-218 (ICIQLQALTLGATM). A helical transmembrane segment spans residues 219–239 (VLCFSLGLALTLVAVGVGAAI). Residues 240–260 (SVQQAVKRWNGFTTLARRAPY) lie on the Cytoplasmic side of the membrane. A helical membrane pass occupies residues 261–281 (FSSILIGLVGLYMGIHGYTGI). The Periplasmic portion of the chain corresponds to 282-283 (MQ).

This sequence belongs to the NiCoT transporter (TC 2.A.52) family. RcnA subfamily.

The protein localises to the cell inner membrane. Functionally, efflux system for nickel and cobalt. This is Nickel/cobalt efflux system RcnA (rcnA) from Salmonella arizonae (strain ATCC BAA-731 / CDC346-86 / RSK2980).